Consider the following 370-residue polypeptide: Acyl-CoA:lysophosphatidylglycerol acyltransferase 1 (370 aa).

A helical transmembrane segment spans residues 22 to 42; that stretch reads FAFMVVNNLVAIPSYICYVII. The HXXXXD motif motif lies at 101–106; sequence HQATGD. A helical membrane pass occupies residues 342–362; it reads LWIFLIQSFAFLSGYMWYNII.

The protein belongs to the 1-acyl-sn-glycerol-3-phosphate acyltransferase family. As to expression, highly expressed in liver and placenta. Also expressed in peripheral blood, lung, kidney and brain. Detected at lower levels in colon. High expression is detected in brain and testis.

It is found in the endoplasmic reticulum membrane. It carries out the reaction a 2-acyl-sn-glycero-3-phosphoethanolamine + octadecanoyl-CoA = 1-octadecanoyl-2-acyl-sn-glycero-3-phosphoethanolamine + CoA. The catalysed reaction is 2-(9Z-octadecenoyl)-sn-glycero-3-phosphoethanolamine + octadecanoyl-CoA = 1-octadecanoyl-2-(9Z-octadecenoyl)-sn-glycero-3-phosphoethanolamine + CoA. The enzyme catalyses a 2-acyl-sn-glycero-3-phosphoethanolamine + hexadecanoyl-CoA = 1-hexadecanoyl-2-acyl-sn-glycero-3-phosphoethanolamine + CoA. It catalyses the reaction 2-(9Z-octadecenoyl)-sn-glycero-3-phosphoethanolamine + hexadecanoyl-CoA = 1-hexadecanoyl-2-(9Z-octadecenoyl)-sn-glycero-3-phosphoethanolamine + CoA. It carries out the reaction 1-tetradecanoyl-sn-glycero-3-phospho-(1'-sn-glycerol) + hexadecanoyl-CoA = 1-tetradecanoyl-2-hexadecanoyl-sn-glycero-3-phospho-(1'-sn-glycerol) + CoA. The catalysed reaction is 1-hexadecanoyl-sn-glycero-3-phospho-(1'-sn-glycerol) + dodecanoyl-CoA = 1-hexadecanoyl-2-dodecanoyl-sn-glycero-3-phospho-(1'-sn-glycerol) + CoA. The enzyme catalyses 1-hexadecanoyl-sn-glycero-3-phospho-(1'-sn-glycerol) + hexadecanoyl-CoA = 1,2-dihexadecanoyl-sn-glycero-3-phospho-(1'-sn-glycerol) + CoA. It catalyses the reaction 1-hexadecanoyl-sn-glycero-3-phospho-(1'-sn-glycerol) + octadecanoyl-CoA = 1-hexadecanoyl-2-octadecanoyl-sn-glycero-3-phospho-(1'-sn-glycerol) + CoA. It carries out the reaction 1-octadecanoyl-sn-glycero-3-phospho-(1'-sn-glycerol) + hexadecanoyl-CoA = 1-octadecanoyl-2-hexadecanoyl-sn-glycero-3-phospho-(1'-sn-glycerol) + CoA. The catalysed reaction is 1-(9Z-octadecenoyl)-sn-glycero-3-phospho-(1'-sn-glycerol) + dodecanoyl-CoA = 1-(9Z-octadecenoyl)-2-dodecanoyl-sn-glycero-3-phospho-(1'-sn-glycerol) + CoA. The enzyme catalyses 1-hexadecanoyl-sn-glycero-3-phospho-(1'-sn-glycerol) + (9Z)-octadecenoyl-CoA = 1-hexadecanoyl-2-(9Z-octadecenoyl)-sn-glycero-3-phospho-(1'-sn-glycerol) + CoA. It catalyses the reaction 1-(9Z-octadecenoyl)-sn-glycero-3-phospho-(1'-sn-glycerol) + hexadecanoyl-CoA = 1-(9Z-octadecenoyl)-2-hexadecanoyl-sn-glycero-3-phospho-(1'-sn-glycerol) + CoA. It carries out the reaction 1-(9Z-octadecenoyl)-sn-glycero-3-phospho-(1'-sn-glycerol) + (9Z)-octadecenoyl-CoA = 1,2-di-(9Z-octadecenoyl)-sn-glycero-3-phospho-(1'-sn-glycerol) + CoA. The catalysed reaction is a 2-acylglycerol + an acyl-CoA = a 1,2-diacylglycerol + CoA. The enzyme catalyses a 2-acylglycerol + hexadecanoyl-CoA = a 1-hexadecanoyl-2-acylglycerol + CoA. It catalyses the reaction a 1-acylglycerol + hexadecanoyl-CoA = an hexadecanoyl-acylglycerol + CoA. It carries out the reaction a 2-acyl-sn-glycero-3-phosphocholine + an acyl-CoA = a 1,2-diacyl-sn-glycero-3-phosphocholine + CoA. The catalysed reaction is 2-(9Z-octadecenoyl)-sn-glycero-3-phosphocholine + octadecanoyl-CoA = 1-octadecanoyl-2-(9Z-octadecenoyl)-sn-glycero-3-phosphocholine + CoA. The enzyme catalyses 2-(9Z,12Z-octadecadienoyl)-sn-glycero-3-phosphocholine + octadecanoyl-CoA = 1-octadecanoyl-2-(9Z,12Z)-octadecadienoyl-sn-glycero-3-phosphocholine + CoA. It catalyses the reaction 2-(5Z,8Z,11Z,14Z)-eicosatetraenoyl-sn-glycero-3-phosphocholine + octadecanoyl-CoA = 1-octadecanoyl-2-(5Z,8Z,11Z,14Z-eicosatetraenoyl)-sn-glycero-3-phosphocholine + CoA. It carries out the reaction 2-(9Z-octadecenoyl)-sn-glycero-3-phosphocholine + hexadecanoyl-CoA = 1-hexadecanoyl-2-(9Z-octadecenoyl)-sn-glycero-3-phosphocholine + CoA. The catalysed reaction is 2-(9Z-octadecenoyl)-sn-glycero-3-phospho-L-serine + hexadecanoyl-CoA = 1-hexadecanoyl-2-(9Z-octadecenoyl)-sn-glycero-3-phospho-L-serine + CoA. The enzyme catalyses 2-(4Z,7Z,10Z,13Z,16Z,19Z-docosahexaenoyl)-sn-glycero-3-phosphocholine + octadecanoyl-CoA = 1-octadecanoyl-2-(4Z,7Z,10Z,13Z,16Z,19Z-docosahexaenoyl)-sn-glycero-3-phosphocholine + CoA. It catalyses the reaction 1-(9Z-octadecenoyl)-sn-glycero-3-phospho-L-serine + octadecanoyl-CoA = 1-(9Z-octadecenoyl)-2-octadecanoyl-sn-glycero-3-phospho-L-serine + CoA. It carries out the reaction a 2-acyl-sn-glycero-3-phosphoethanolamine + a fatty acyl-CoA = a 1,2-diacyl-sn-glycero-3-phosphoethanolamine + CoA. Functionally, lysophospholipid acyltransferase involved in fatty acyl chain remodeling of glycerophospholipids in the endoplasmic reticulum membrane. Selectively catalyzes the transfer and esterification of saturated long-chain fatty acids from acyl-CoA to the sn-1 position of 1-lyso-2-acyl phosphatidylethanolamines (1-lyso-PE, LPE), with a preference for stearoyl CoA over palmitoyl CoA as acyl donor. Acts in concert with an unknown phospholipase A1 to convert palmitate phosphatidylethanolamine (PE) species into stearate ones. Provides substrates to the PE methylation pathway, controlling stearate/palmitate composition of PE and phosphatidylcholine (PC) species with an overall impact on de novo hepatic lipid synthesis, body fat content and life span. Can acylate lysophosphatidylglycerols (LPG) using various saturated fatty acyl-CoAs as acyl donors. Can also acylate monoacylglycerols with a preference for 2-monoacylglycerols over 1-monoacylglycerols. Has no activity toward lysophosphatidic acids (LPA). This chain is Acyl-CoA:lysophosphatidylglycerol acyltransferase 1, found in Homo sapiens (Human).